We begin with the raw amino-acid sequence, 472 residues long: MFRGAWMWPGKDAAALTICCCCCCWAPRPSDKPCADSERAQRWRLSLASLLFFTVLLADHLWLCAGARPRARELSSAMRPPWGAGRERQPVPPRAVLPLPPPPPGEPSAPPGTCGPRYSNLTKAAPAAGSRPVCGGVPEPTGLDAACTKLQSLQRLFEPTTPAPPLRPPDSLSRAPAEFPSAKKNLLKGHFRNFTLSFCDTYTVWDLLLGMDRPDSLDCSLDTLMGDLLAVVASPGSGAWEACSNCIEAYQRLDRHAQEKYDEFDLVLHKYLQAEEYSIRSCTKGCKAVYKAWLCSEYFSVTQQECQRWVPCKQYCLEVQTRCPFILPDNEEMVYGGLPGFICTGLLDTSPKRLETKCCDVQWVSCEAKKKKFKESEAPKTHQQQFHHSYFHHYHQQYHHYHPHHDPPGRVSNKPALLPVSGGSRLSPSRIRLCVLVLMLLHTVVSFSSNQGGGGLGLETLPALEEGLTREE.

The chain crosses the membrane as a helical span at residues 47–67 (LASLLFFTVLLADHLWLCAGA). The interval 77–114 (AMRPPWGAGRERQPVPPRAVLPLPPPPPGEPSAPPGTC) is disordered. Residues 90 to 110 (PVPPRAVLPLPPPPPGEPSAP) show a composition bias toward pro residues. 2 N-linked (GlcNAc...) asparagine glycosylation sites follow: Asn120 and Asn193. The helical transmembrane segment at 433 to 453 (LCVLVLMLLHTVVSFSSNQGG) threads the bilayer.

Belongs to the NALF family.

It is found in the membrane. Functionally, probable component of the NALCN channel complex, a channel that regulates the resting membrane potential and controls neuronal excitability. The chain is NALCN channel auxiliary factor 2 from Homo sapiens (Human).